The chain runs to 121 residues: MIKKPDKKTLRQGKHKRVRRKVAGTGERPRLCIFKSLHHIYAQIIDDEKGVTLVAASTLEEGLKGLESKTNIAAAQEVGANIAERAREKGIIEVVFDRNGYKYHGSVAALANAAREKGLVF.

Basic residues predominate over residues 1–22 (MIKKPDKKTLRQGKHKRVRRKV). The disordered stretch occupies residues 1-23 (MIKKPDKKTLRQGKHKRVRRKVA).

Belongs to the universal ribosomal protein uL18 family. In terms of assembly, part of the 50S ribosomal subunit; part of the 5S rRNA/L5/L18/L25 subcomplex. Contacts the 5S and 23S rRNAs.

Its function is as follows. This is one of the proteins that bind and probably mediate the attachment of the 5S RNA into the large ribosomal subunit, where it forms part of the central protuberance. This Syntrophomonas wolfei subsp. wolfei (strain DSM 2245B / Goettingen) protein is Large ribosomal subunit protein uL18.